The sequence spans 75 residues: Metallothionein-like protein 1 (75 aa).

It belongs to the metallothionein superfamily. Type 15 family.

Its function is as follows. Metallothioneins have a high content of cysteine residues that bind various heavy metals. This chain is Metallothionein-like protein 1, found in Cicer arietinum (Chickpea).